The following is a 1186-amino-acid chain: Syntaxin-binding protein 5-like (1186 aa).

Methionine 1 bears the N-acetylmethionine mark. Residues 15-40 (ASSPGSGSSSGSNSGGGAGSGSVHPA) form a disordered region. Residues 16–26 (SSPGSGSSSGS) are compositionally biased toward low complexity. WD repeat units lie at residues 74–107 (TALA…CYCQ), 114–153 (VLQL…SLKF), 158–194 (ITYC…GYVI), 213–247 (HLSD…ELRV), 253–285 (IHSI…PSRP), 307–349 (PILK…KAIT), 357–391 (IVEF…VVDL), 413–490 (TCTA…YKLK), 518–629 (QMIY…ELVI), and 643–705 (TSLA…IADN). Threonine 568 is subject to Phosphothreonine. A phosphoserine mark is found at serine 574, serine 589, and serine 593. Threonine 596 carries the post-translational modification Phosphothreonine. Serine 599 carries the phosphoserine modification. Arginine 709 is subject to Omega-N-methylarginine. The span at 748–769 (TSDHVNGHCTSPTSQSCSSGKR) shows a compositional bias: polar residues. A disordered region spans residues 748 to 771 (TSDHVNGHCTSPTSQSCSSGKRLS). Serine 763, serine 765, serine 766, serine 771, serine 772, serine 793, serine 800, serine 812, serine 820, serine 822, and serine 823 each carry phosphoserine. WD repeat units lie at residues 832 to 889 (ITAL…SGTF), 898 to 969 (TFSC…QTCL), 974 to 1018 (ITET…LDVN), and 1032 to 1055 (CFTN…TYSQ). At threonine 1093 the chain carries Phosphothreonine. One can recognise a v-SNARE coiled-coil homology domain in the interval 1121–1181 (SIEGMKGAAG…HELMLKYKDK (61 aa)).

Belongs to the WD repeat L(2)GL family. In terms of assembly, interacts with STX1A and STX4. Post-translationally, phosphorylated, leading to STXBP5L increased turnover and subsequent de-repression of insulin secretion. Phosphorylated on serine residues in response to glucose or phorbol esters. In terms of processing, ubiquitinated by the E3 ligase SYVN1, leading to STXBP5L proteasomal degradation. As to expression, detected in kidney, hippocampus and lung carcinoma.

Its subcellular location is the cytoplasm. It localises to the cell membrane. It is found in the membrane. Its function is as follows. Plays a role in vesicle trafficking and exocytosis inhibition. In pancreatic beta-cells, inhibits insulin secretion probably by interacting with and regulating STX1A and STX4, key t-SNARE proteins involved in the fusion of insulin granules to the plasma membrane. Also plays a role in neurotransmitter release by inhibiting basal acetylcholine release from axon terminals and by preventing synaptic fatigue upon repetitive stimulation. Promotes as well axonal outgrowth. In Homo sapiens (Human), this protein is Syntaxin-binding protein 5-like (STXBP5L).